The primary structure comprises 232 residues: Large ribosomal subunit protein uL1 (232 aa).

The protein belongs to the universal ribosomal protein uL1 family. In terms of assembly, part of the 50S ribosomal subunit.

Its function is as follows. Binds directly to 23S rRNA. The L1 stalk is quite mobile in the ribosome, and is involved in E site tRNA release. Functionally, protein L1 is also a translational repressor protein, it controls the translation of the L11 operon by binding to its mRNA. The polypeptide is Large ribosomal subunit protein uL1 (Hahella chejuensis (strain KCTC 2396)).